The following is a 549-amino-acid chain: Vacuolar fusion protein MON1 homolog A (549 aa).

2 disordered regions span residues 1 to 90 (MAAD…EQIS) and 109 to 137 (EEMR…GKEE). Residues 110–119 (EMRQSQEGKL) show a composition bias toward basic and acidic residues.

The protein belongs to the MON1/SAND family.

Its function is as follows. Plays an important role in membrane trafficking through the secretory apparatus. Not involved in endocytic trafficking to lysosomes. In Gallus gallus (Chicken), this protein is Vacuolar fusion protein MON1 homolog A (MON1A).